We begin with the raw amino-acid sequence, 243 residues long: Protein VERNALIZATION 1 (243 aa).

The MADS-box domain occupies 1–61 (MGRGKVQLKR…GKLYEFATDS (61 aa)). Residues 88–178 (QGNWCHEYRK…QKELVEKQKA (91 aa)) enclose the K-box domain. Residues 122 to 178 (LKELQQLEQQLESSLKHIRSRKNQLMHESISELQRKERSLQEENKALQKELVEKQKA) are a coiled coil. A disordered region spans residues 173-243 (VEKQKAHTQQ…PPWMVSHISG (71 aa)). Over residues 179-192 (HTQQAQWEQTHPQT) the composition is skewed to polar residues.

Its subcellular location is the nucleus. Functionally, component of a grass-specific mechanism of vernalization, a process by which prolonged cold exposure provides competence to flower in daylengths longer than 12 hours. Involved in the exit of vernalization and confers flowering competency at the expense of freezing tolerance, probably by promoting the expression of VRN3; this process is essential in cv. Bd29-1 for flowering but seems do not occur in cv. Bd21. This chain is Protein VERNALIZATION 1, found in Brachypodium distachyon (Purple false brome).